The following is a 161-amino-acid chain: Dihydrofolate reductase (161 aa).

The DHFR domain maps to 2 to 157; it reads TLSIIVAHDK…IPHTFLHLVR (156 aa). 6–8 is a substrate binding site; it reads IVA. Residues 7 to 8 and 15 to 20 each bind NADP(+); these read VA and IGYQNQ. Position 28 (Asp28) interacts with substrate. 44–47 is a binding site for NADP(+); sequence GRKT. Arg58 serves as a coordination point for substrate. NADP(+)-binding positions include 63-66 and 93-98; these read LTNQ and FGGQTL. Position 112 (Thr112) interacts with substrate.

This sequence belongs to the dihydrofolate reductase family.

The enzyme catalyses (6S)-5,6,7,8-tetrahydrofolate + NADP(+) = 7,8-dihydrofolate + NADPH + H(+). It participates in cofactor biosynthesis; tetrahydrofolate biosynthesis; 5,6,7,8-tetrahydrofolate from 7,8-dihydrofolate: step 1/1. In terms of biological role, key enzyme in folate metabolism. Catalyzes an essential reaction for de novo glycine and purine synthesis, and for DNA precursor synthesis. The polypeptide is Dihydrofolate reductase (folA) (Staphylococcus epidermidis).